A 411-amino-acid polypeptide reads, in one-letter code: Ferrochelatase, mitochondrial (411 aa).

The N-terminal 41 residues, 1-41, are a transit peptide targeting the mitochondrion; sequence MAAFRAAHRLLGHILRNESSAGLVTQRWSSSAAVASVPKSS. Residues 34-55 are disordered; that stretch reads VASVPKSSDPKPHAQPDKRKPK. Over residues 41–51 the composition is skewed to basic and acidic residues; sequence SDPKPHAQPDK. Residues Arg102, Tyr110, and Ser117 each coordinate protoporphyrin IX. Cys183 is a [2Fe-2S] cluster binding site. Active-site residues include His217 and Asp370. Residues Cys390, Cys393, and Cys398 each coordinate [2Fe-2S] cluster.

It belongs to the ferrochelatase family. As to quaternary structure, homodimer. Homotetramer. It depends on [2Fe-2S] cluster as a cofactor.

The protein resides in the mitochondrion inner membrane. It catalyses the reaction heme b + 2 H(+) = protoporphyrin IX + Fe(2+). The protein operates within porphyrin-containing compound metabolism; protoheme biosynthesis; protoheme from protoporphyrin-IX: step 1/1. Functionally, catalyzes the ferrous insertion into protoporphyrin IX. This chain is Ferrochelatase, mitochondrial, found in Xenopus laevis (African clawed frog).